The following is a 222-amino-acid chain: uncharacterized protein (222 aa).

A disordered region spans residues 142–222; sequence ARRGGCVHPP…LPDPPSAGHL (81 aa). Residues 160-169 are compositionally biased toward low complexity; sequence QSRSISSRRA. Over residues 182–196 the composition is skewed to basic residues; that stretch reads PRRRPHRHRTRPQTR.

It belongs to the Rv1128c/1148c/1588c/1702c/1945/3466 family.

This is an uncharacterized protein from Mycobacterium tuberculosis (strain CDC 1551 / Oshkosh).